The sequence spans 143 residues: Large-conductance mechanosensitive channel (143 aa).

2 consecutive transmembrane segments (helical) span residues 10-30 and 89-109; these read FAVK…GAFS and GSFI…FLMV.

The protein belongs to the MscL family. As to quaternary structure, homopentamer.

The protein resides in the cell inner membrane. Channel that opens in response to stretch forces in the membrane lipid bilayer. May participate in the regulation of osmotic pressure changes within the cell. The chain is Large-conductance mechanosensitive channel from Burkholderia multivorans (strain ATCC 17616 / 249).